The chain runs to 360 residues: DNA replication and repair protein RecF (360 aa).

G33–T40 is a binding site for ATP.

The protein belongs to the RecF family.

The protein localises to the cytoplasm. Functionally, the RecF protein is involved in DNA metabolism; it is required for DNA replication and normal SOS inducibility. RecF binds preferentially to single-stranded, linear DNA. It also seems to bind ATP. This Rickettsia bellii (strain OSU 85-389) protein is DNA replication and repair protein RecF.